A 133-amino-acid polypeptide reads, in one-letter code: Small ribosomal subunit protein uS8 (133 aa).

This sequence belongs to the universal ribosomal protein uS8 family. As to quaternary structure, part of the 30S ribosomal subunit. Contacts proteins S5 and S12.

In terms of biological role, one of the primary rRNA binding proteins, it binds directly to 16S rRNA central domain where it helps coordinate assembly of the platform of the 30S subunit. The polypeptide is Small ribosomal subunit protein uS8 (Synechocystis sp. (strain ATCC 27184 / PCC 6803 / Kazusa)).